We begin with the raw amino-acid sequence, 520 residues long: 2-isopropylmalate synthase (520 aa).

In terms of domain architecture, Pyruvate carboxyltransferase spans 12–274 (IRIFDTTLRD…DSAINTPRIV (263 aa)). Residues Asp-21, His-209, His-211, and Asn-245 each coordinate Mn(2+). The segment at 396–520 (RLASMTISDV…VVAGKTAAVA (125 aa)) is regulatory domain.

Belongs to the alpha-IPM synthase/homocitrate synthase family. LeuA type 1 subfamily. Homodimer. Requires Mn(2+) as cofactor.

Its subcellular location is the cytoplasm. The catalysed reaction is 3-methyl-2-oxobutanoate + acetyl-CoA + H2O = (2S)-2-isopropylmalate + CoA + H(+). The protein operates within amino-acid biosynthesis; L-leucine biosynthesis; L-leucine from 3-methyl-2-oxobutanoate: step 1/4. Catalyzes the condensation of the acetyl group of acetyl-CoA with 3-methyl-2-oxobutanoate (2-ketoisovalerate) to form 3-carboxy-3-hydroxy-4-methylpentanoate (2-isopropylmalate). The chain is 2-isopropylmalate synthase from Xanthomonas axonopodis pv. citri (strain 306).